The sequence spans 1373 residues: DNA-directed RNA polymerase subunit beta (1373 aa).

The protein belongs to the RNA polymerase beta chain family. As to quaternary structure, the RNAP catalytic core consists of 2 alpha, 1 beta, 1 beta' and 1 omega subunit. When a sigma factor is associated with the core the holoenzyme is formed, which can initiate transcription.

It catalyses the reaction RNA(n) + a ribonucleoside 5'-triphosphate = RNA(n+1) + diphosphate. In terms of biological role, DNA-dependent RNA polymerase catalyzes the transcription of DNA into RNA using the four ribonucleoside triphosphates as substrates. This chain is DNA-directed RNA polymerase subunit beta, found in Rickettsia massiliae (strain Mtu5).